Here is a 1508-residue protein sequence, read N- to C-terminus: Ras guanine nucleotide exchange factor Y (1508 aa).

Disordered regions lie at residues 1-73 (MIII…NNNE), 128-182 (KVLS…PKSV), 197-272 (IDNN…YSTS), 396-517 (ILQC…EDED), 565-593 (LSEN…SIPT), 606-727 (LPNI…AEPS), 831-1021 (NVII…SNKE), and 1153-1172 (TNED…TNKN). 2 stretches are compositionally biased toward low complexity: residues 9–22 (NINN…NNNS) and 33–72 (NNNN…NNNN). Polar residues-rich tracts occupy residues 128–150 (KVLS…TNTI) and 172–182 (DRTSQDIPKSV). Residues 199–216 (NNTTNNNSNNNNNSSLST) are compositionally biased toward low complexity. The span at 223-232 (DSLETNPIKD) shows a compositional bias: basic and acidic residues. Residues 233–250 (EESEESEESEESKEEEEE) are compositionally biased toward acidic residues. Residues 255-272 (IKTTKTTSETIESSYSTS) show a composition bias toward low complexity. Residues 399-409 (CKDDSSSKDQD) are compositionally biased toward basic and acidic residues. Over residues 413–447 (NNSAGSSGNSSASNSNRNSIAFSSSNHFSSESSQS) the composition is skewed to low complexity. Over residues 465-475 (PQSPSPSPSPP) the composition is skewed to pro residues. Residues 492-510 (FNQQTNFSVSPTKSPSNEK) are compositionally biased toward polar residues. Composition is skewed to low complexity over residues 574–593 (NQPS…SIPT), 606–660 (LPNI…LTES), 668–687 (NNNN…NNNN), 831–855 (NVII…NTVK), 862–891 (NKSS…SLTP), 942–984 (SLWS…SPPT), 993–1019 (ITTG…NNSN), and 1160–1172 (SNSN…TNKN). The stretch at 659-686 (ESLKTRIEENNNNNNNKNINNNNNNNNN) forms a coiled coil. An N-terminal Ras-GEF domain is found at 1074-1234 (NRIKVRSASL…IILKIIDRKA (161 aa)). The Ras-GEF domain maps to 1278-1508 (DDLEIARQLT…LYKQSKIIEP (231 aa)).

Promotes the exchange of Ras-bound GDP by GTP. The protein is Ras guanine nucleotide exchange factor Y (gefY) of Dictyostelium discoideum (Social amoeba).